The chain runs to 296 residues: Circadian clock oscillator protein KaiA (296 aa).

The tract at residues Ala2–Ser133 is psR domain, binds oxidized quinones. The KaiA N-terminal domain occupies Ala2–Leu152. Residues Gly153 to Arg161 form a flexible linker region. The region spanning Asp162–Pro270 is the KaiA C-terminal domain.

As to quaternary structure, homodimer. The KaiABC complex composition changes during the circadian cycle to control KaiC phosphorylation. Complexes KaiC(6), KaiA(2-4):KaiC(6), KaiB(6):KaiC(6) and KaiC(6):KaiB(6):KaiA(12) are among the most important forms, many form cooperatively. KaiA and CikA bind to the same region of the KaiB(fs) form and therefore compete.

Key component of the KaiABC oscillator complex, which constitutes the main circadian regulator in cyanobacteria. Complex composition changes during the circadian cycle to control KaiC phosphorylation. KaiA stimulates KaiC autophosphorylation, while KaiB sequesters KaiA, leading to KaiC autodephosphorylation. KaiA binding to the KaiC CII domain during the subjective day yields KaiA(2-4):KaiC(6) complexes which stimulate KaiC autophosphorylation. Phospho-Ser-431 KaiC accumulation triggers binding of KaiB during the subjective night to form the KaiB(6):KaiC(6) complex, leading to changes in the output regulators CikA and SasA. KaiB(6):KaiC(6) formation exposes a site for KaiA binding on KaiB that sequesters KaiA from KaiC's CII domain, making the KaiC(6):KaiB(6):KaiA(12) complex resulting in KaiC autodephosphorylation. Complete dephosphorylation of KaiC leads to dissociation of KaiA(2):KaiB(1), completing 1 cycle of the Kai oscillator. Its function is as follows. Binds oxidized quinones via the N-terminal PsR domain, allowing it to sense redox changes and possibly mediate clock input. The protein is Circadian clock oscillator protein KaiA of Parasynechococcus marenigrum (strain WH8102).